A 312-amino-acid polypeptide reads, in one-letter code: Ornithine carbamoyltransferase, catabolic (312 aa).

Carbamoyl phosphate contacts are provided by residues 57 to 60, Gln84, Arg108, and 135 to 138; these read STRT and HPTQ. Residues Asn167, Asp231, and 235 to 236 contribute to the L-ornithine site; that span reads SM. Position 272 to 273 (272 to 273) interacts with carbamoyl phosphate; it reads CL.

It belongs to the aspartate/ornithine carbamoyltransferase superfamily. OTCase family.

It localises to the cytoplasm. The catalysed reaction is carbamoyl phosphate + L-ornithine = L-citrulline + phosphate + H(+). The protein operates within amino-acid degradation; L-arginine degradation via ADI pathway; carbamoyl phosphate from L-arginine: step 2/2. Reversibly catalyzes the transfer of the carbamoyl group from carbamoyl phosphate (CP) to the N(epsilon) atom of ornithine (ORN) to produce L-citrulline. The polypeptide is Ornithine carbamoyltransferase, catabolic (arcB) (Mycoplasma capricolum subsp. capripneumoniae).